Here is a 555-residue protein sequence, read N- to C-terminus: Formate--tetrahydrofolate ligase (555 aa).

65–72 contacts ATP; it reads TPAGEGKT.

The protein belongs to the formate--tetrahydrofolate ligase family.

The catalysed reaction is (6S)-5,6,7,8-tetrahydrofolate + formate + ATP = (6R)-10-formyltetrahydrofolate + ADP + phosphate. It functions in the pathway one-carbon metabolism; tetrahydrofolate interconversion. The chain is Formate--tetrahydrofolate ligase from Paracoccus denitrificans (strain Pd 1222).